The primary structure comprises 524 residues: Tissue-resident T-cell transcription regulator protein ZNF683 (524 aa).

Basic and acidic residues predominate over residues 130–142 (NKDKLGKQPERAG). 2 disordered regions span residues 130-166 (NKDK…NRKS) and 265-303 (QALP…LSSQ). 2 C2H2-type zinc fingers span residues 322–344 (YECN…LRVH) and 350–372 (FQCA…HLVH). The C2H2-type 3; degenerate zinc finger occupies 398–420 (REREVCHKRFSSSSNLKTHLRLH). A C2H2-type 4 zinc finger spans residues 426–448 (FQCSVCRSRFTQHIHLKLHHRLH).

Belongs to the krueppel C2H2-type zinc-finger protein family. Expressed in terminally differentiated effector CD8(+) T-cells, but not in naive and central memory cells. Expressed in terminally differentiated natural killer (NK) cells and natural killer (NKT) T-cells (at protein level). Expressed strongly in effector-type CD8(+) T-cells and weakly in naive and memory CD8(+) T-cells. Expressed in terminally differentiated natural killer (NK) cells. Isoform 2 is strongly expressed in effector CD8(+) T and natural killer (NK) cells. Isoform 1 is expressed in effector CD8(+) T and natural killer (NK) cells. In terms of tissue distribution, (Microbial infection) Expressed in cytomegalovirus (CMV)-infected effector CD8(+) T-cells (at protein level).

It is found in the nucleus. In terms of biological role, transcription factor that mediates a transcriptional program in various innate and adaptive immune tissue-resident lymphocyte T-cell types such as tissue-resident memory T (Trm), natural killer (trNK) and natural killer T (NKT) cells and negatively regulates gene expression of proteins that promote the egress of tissue-resident T-cell populations from non-lymphoid organs. Plays a role in the development, retention and long-term establishment of adaptive and innate tissue-resident lymphocyte T cell types in non-lymphoid organs, such as the skin and gut, but also in other nonbarrier tissues like liver and kidney, and therefore may provide immediate immunological protection against reactivating infections or viral reinfection. Also plays a role in the differentiation of both thymic and peripheral NKT cells. Negatively regulates the accumulation of interferon-gamma (IFN-gamma) in NKT cells at steady state or after antigenic stimulation. Positively regulates granzyme B production in NKT cells after innate stimulation. Associates with the transcriptional repressor PRDM1/BLIMP1 to chromatin at gene promoter regions. Functionally, lacks transcriptional repressor activity. Binds to DNA within promoter regions of the transcriptional repressor PRDM1/BLIMP1 target sites. Unable to regulate interferon-gamma (IFN-gamma) production in cytomegalovirus (CMV)-infected effector CD8(+) T-cells. Transcriptional repressor that binds to DNA within promoter regions of the transcriptional repressor PRDM1/BLIMP1 target sites. Regulates interferon-gamma (IFN-gamma) production in cytomegalovirus (CMV)-infected effector CD8(+) T cells. In Homo sapiens (Human), this protein is Tissue-resident T-cell transcription regulator protein ZNF683.